A 191-amino-acid polypeptide reads, in one-letter code: Photosystem I assembly protein Ycf4 (191 aa).

A run of 2 helical transmembrane segments spans residues 34–54 (VASM…SSYF) and 68–88 (IFVP…LLAI).

Belongs to the Ycf4 family.

Its subcellular location is the cellular thylakoid membrane. Its function is as follows. Seems to be required for the assembly of the photosystem I complex. This is Photosystem I assembly protein Ycf4 from Prochlorococcus marinus (strain NATL1A).